A 375-amino-acid chain; its full sequence is Queuine tRNA-ribosyltransferase (375 aa).

Asp-90 serves as the catalytic Proton acceptor. Substrate is bound by residues 90-94 (DSGGF), Asp-144, Gln-193, and Gly-220. An RNA binding region spans residues 251-257 (GVGTPED). Asp-270 acts as the Nucleophile in catalysis. The segment at 275–279 (TRNAR) is RNA binding; important for wobble base 34 recognition. 4 residues coordinate Zn(2+): Cys-308, Cys-310, Cys-313, and His-339.

This sequence belongs to the queuine tRNA-ribosyltransferase family. As to quaternary structure, homodimer. Within each dimer, one monomer is responsible for RNA recognition and catalysis, while the other monomer binds to the replacement base PreQ1. The cofactor is Zn(2+).

The catalysed reaction is 7-aminomethyl-7-carbaguanine + guanosine(34) in tRNA = 7-aminomethyl-7-carbaguanosine(34) in tRNA + guanine. Its pathway is tRNA modification; tRNA-queuosine biosynthesis. Catalyzes the base-exchange of a guanine (G) residue with the queuine precursor 7-aminomethyl-7-deazaguanine (PreQ1) at position 34 (anticodon wobble position) in tRNAs with GU(N) anticodons (tRNA-Asp, -Asn, -His and -Tyr). Catalysis occurs through a double-displacement mechanism. The nucleophile active site attacks the C1' of nucleotide 34 to detach the guanine base from the RNA, forming a covalent enzyme-RNA intermediate. The proton acceptor active site deprotonates the incoming PreQ1, allowing a nucleophilic attack on the C1' of the ribose to form the product. After dissociation, two additional enzymatic reactions on the tRNA convert PreQ1 to queuine (Q), resulting in the hypermodified nucleoside queuosine (7-(((4,5-cis-dihydroxy-2-cyclopenten-1-yl)amino)methyl)-7-deazaguanosine). In Janthinobacterium sp. (strain Marseille) (Minibacterium massiliensis), this protein is Queuine tRNA-ribosyltransferase.